We begin with the raw amino-acid sequence, 310 residues long: N-acetyl-gamma-glutamyl-phosphate reductase (310 aa).

The active site involves Cys117.

The protein belongs to the NAGSA dehydrogenase family. Type 2 subfamily.

The protein localises to the cytoplasm. It catalyses the reaction N-acetyl-L-glutamate 5-semialdehyde + phosphate + NADP(+) = N-acetyl-L-glutamyl 5-phosphate + NADPH + H(+). It functions in the pathway amino-acid biosynthesis; L-arginine biosynthesis; N(2)-acetyl-L-ornithine from L-glutamate: step 3/4. Functionally, catalyzes the NADPH-dependent reduction of N-acetyl-5-glutamyl phosphate to yield N-acetyl-L-glutamate 5-semialdehyde. This is N-acetyl-gamma-glutamyl-phosphate reductase from Rhizobium meliloti (strain 1021) (Ensifer meliloti).